The primary structure comprises 615 residues: Melanopsin-B (615 aa).

The Extracellular segment spans residues 1-19 (MDMDRGFYRKVDVPDHAHY). A helical transmembrane segment spans residues 20–40 (VIAFFVLIIGVVGVTGNALVM). Residues 41–56 (YAFLCNKKLRTPPNYF) are Cytoplasmic-facing. The chain crosses the membrane as a helical span at residues 57 to 77 (IMNLAVSDFLMAITQSPIFFI). At 78 to 93 (NSLFKEWIFGETGCRM) the chain is on the extracellular side. An intrachain disulfide couples C91 to C169. The helical transmembrane segment at 94 to 114 (YAFCGALFGITSMINLLAISL) threads the bilayer. Residues 115 to 136 (DRYIVITKPPQAIRWVSGRRTM) lie on the Cytoplasmic side of the membrane. Residues 137-157 (VVILLVWLYSLAWSLAPLLGW) form a helical membrane-spanning segment. The Extracellular portion of the chain corresponds to 158-189 (SSYIPEGLMTSCTWDYVTSTPANKGYTLMLCC). The chain crosses the membrane as a helical span at residues 190–210 (FVFFIPLGIISYCYLCMFLAI). Residues 211–244 (RSAGREIERLGTQVRKSTLMQQQTIKTEWKLTKV) lie on the Cytoplasmic side of the membrane. Residues 245–265 (AFVVIIVYVHSWSPYACVTLI) form a helical membrane-spanning segment. The Extracellular segment spans residues 266–279 (AWAGYGSHLSPYSK). A helical membrane pass occupies residues 280 to 300 (AVPAVIAKASAIYNPFIYAII). K287 carries the post-translational modification N6-(retinylidene)lysine. Topologically, residues 301–615 (HSKYRDTLAE…RNLEESFMAL (315 aa)) are cytoplasmic. Disordered regions lie at residues 390–420 (LGRS…TVAD) and 465–502 (NKHP…QNHP). A compositionally biased stretch (polar residues) spans 401–415 (AQQNRQTRSSDTLEQ). Residues 469 to 478 (NNNHKNHNNR) are compositionally biased toward basic residues.

Belongs to the G-protein coupled receptor 1 family. Opsin subfamily. Expressed in the inner nuclear layer of the retina, possibly in amacrine and ganglion cells. Expressed in a subpopulation of neurons in the dorsal habenula.

The protein localises to the cell membrane. Its function is as follows. Photoreceptor implicated in non-image-forming responses to light. The protein is Melanopsin-B (opn4b) of Gadus morhua (Atlantic cod).